The primary structure comprises 225 residues: Putative O-phosphotransferase MT2714 (225 aa).

Position 30 to 37 (30 to 37 (GGSSAGKT)) interacts with ATP.

The protein to S.violaceus chloramphenicol 3-O phosphotransferase.

This Mycobacterium tuberculosis (strain CDC 1551 / Oshkosh) protein is Putative O-phosphotransferase MT2714.